Here is a 365-residue protein sequence, read N- to C-terminus: Mannitol dehydrogenase (365 aa).

Residues Cys50, His72, Cys103, Cys106, Cys109, Cys117, and Cys166 each coordinate Zn(2+).

The protein belongs to the zinc-containing alcohol dehydrogenase family. It depends on Zn(2+) as a cofactor.

The protein resides in the cytoplasm. The catalysed reaction is D-mannitol + NAD(+) = D-mannose + NADH + H(+). In terms of biological role, oxidizes mannitol to mannose. Provides the initial step by which translocated mannitol is committed to central metabolism and, by regulating mannitol pool size, is important in regulating salt tolerance at the cellular level. In Apium graveolens (Celery), this protein is Mannitol dehydrogenase (MTD).